A 101-amino-acid chain; its full sequence is Large ribosomal subunit protein uL23 (101 aa).

The protein belongs to the universal ribosomal protein uL23 family. As to quaternary structure, part of the 50S ribosomal subunit. Contacts protein L29, and trigger factor when it is bound to the ribosome.

One of the early assembly proteins it binds 23S rRNA. One of the proteins that surrounds the polypeptide exit tunnel on the outside of the ribosome. Forms the main docking site for trigger factor binding to the ribosome. The sequence is that of Large ribosomal subunit protein uL23 from Nocardia farcinica (strain IFM 10152).